Here is a 269-residue protein sequence, read N- to C-terminus: Surfeit locus protein 4 (269 aa).

The next 5 helical transmembrane spans lie at 64-84 (LLAS…CILV), 92-112 (YACF…SILW), 179-199 (FFSI…AIGF), 203-223 (LAAL…NAFW), and 239-259 (FFQT…GPGG). A Di-lysine motif motif is present at residues 266–269 (KKEW).

Belongs to the SURF4 family. As to quaternary structure, found in a complex composed at least of SURF4, TMED2 and TMED10. May interact with LMAN1. Interacts with ZFYVE27 and with KIF5A in a ZFYVE27-dependent manner. Interacts with STING1. Interacts with SAR1B. Interacts with TMEM41B.

It localises to the endoplasmic reticulum membrane. Its subcellular location is the endoplasmic reticulum-Golgi intermediate compartment membrane. The protein resides in the golgi apparatus membrane. Functionally, endoplasmic reticulum cargo receptor that mediates the export of lipoproteins by recruiting cargos into COPII vesicles to facilitate their secretion. Acts as a cargo receptor for lipoproteins bearing both APOB and APOA1, thereby regulating lipoprotein delivery and the maintenance of lipid homeostasis. Synergizes with the GTPase SAR1B to mediate transport of circulating lipoproteins. Promotes the secretion of PCSK9. Also mediates the efficient secretion of erythropoietin (EPO). May also play a role in the maintenance of the architecture of the endoplasmic reticulum-Golgi intermediate compartment and of the Golgi. The chain is Surfeit locus protein 4 from Bos taurus (Bovine).